We begin with the raw amino-acid sequence, 293 residues long: 4-hydroxy-tetrahydrodipicolinate synthase (293 aa).

Thr45 contributes to the pyruvate binding site. Residue Tyr133 is the Proton donor/acceptor of the active site. Lys162 (schiff-base intermediate with substrate) is an active-site residue. Ile204 contacts pyruvate.

The protein belongs to the DapA family. Homotetramer; dimer of dimers.

It localises to the cytoplasm. It carries out the reaction L-aspartate 4-semialdehyde + pyruvate = (2S,4S)-4-hydroxy-2,3,4,5-tetrahydrodipicolinate + H2O + H(+). The protein operates within amino-acid biosynthesis; L-lysine biosynthesis via DAP pathway; (S)-tetrahydrodipicolinate from L-aspartate: step 3/4. Its function is as follows. Catalyzes the condensation of (S)-aspartate-beta-semialdehyde [(S)-ASA] and pyruvate to 4-hydroxy-tetrahydrodipicolinate (HTPA). The protein is 4-hydroxy-tetrahydrodipicolinate synthase of Brucella abortus biovar 1 (strain 9-941).